A 320-amino-acid polypeptide reads, in one-letter code: tRNA U34 carboxymethyltransferase (320 aa).

Carboxy-S-adenosyl-L-methionine-binding positions include Lys89, Trp103, Lys108, Gly128, 150–152, 179–180, Met194, Tyr198, and Arg313; these read DPT and IE.

The protein belongs to the class I-like SAM-binding methyltransferase superfamily. CmoB family. Homotetramer.

It catalyses the reaction carboxy-S-adenosyl-L-methionine + 5-hydroxyuridine(34) in tRNA = 5-carboxymethoxyuridine(34) in tRNA + S-adenosyl-L-homocysteine + H(+). In terms of biological role, catalyzes carboxymethyl transfer from carboxy-S-adenosyl-L-methionine (Cx-SAM) to 5-hydroxyuridine (ho5U) to form 5-carboxymethoxyuridine (cmo5U) at position 34 in tRNAs. This chain is tRNA U34 carboxymethyltransferase, found in Actinobacillus pleuropneumoniae serotype 3 (strain JL03).